An 84-amino-acid polypeptide reads, in one-letter code: Putative membrane protein insertion efficiency factor (84 aa).

It belongs to the UPF0161 family.

It localises to the cell inner membrane. Could be involved in insertion of integral membrane proteins into the membrane. This Shewanella baltica (strain OS195) protein is Putative membrane protein insertion efficiency factor.